The following is a 173-amino-acid chain: Archaemetzincin (173 aa).

His-130 lines the Zn(2+) pocket. Glu-131 acts as the Proton acceptor in catalysis. 6 residues coordinate Zn(2+): His-134, His-140, Cys-141, Cys-146, Cys-165, and Cys-168.

Belongs to the peptidase M54 family. As to quaternary structure, monomer. Requires Zn(2+) as cofactor.

In terms of biological role, probable zinc metalloprotease whose natural substrate is unknown. This Halobacterium salinarum (strain ATCC 29341 / DSM 671 / R1) protein is Archaemetzincin.